Consider the following 512-residue polypeptide: GMP synthase [glutamine-hydrolyzing] (512 aa).

Positions 7-197 (TIIVLDFGSQ…VFGVCGCSEG (191 aa)) constitute a Glutamine amidotransferase type-1 domain. Residue cysteine 84 is the Nucleophile of the active site. Catalysis depends on residues histidine 171 and glutamate 173. The region spanning 198–387 (WNMENFIEVE…LGIPDEIVWR (190 aa)) is the GMPS ATP-PPase domain. 225–231 (SGGVDSS) contacts ATP.

In terms of assembly, homodimer.

It catalyses the reaction XMP + L-glutamine + ATP + H2O = GMP + L-glutamate + AMP + diphosphate + 2 H(+). It functions in the pathway purine metabolism; GMP biosynthesis; GMP from XMP (L-Gln route): step 1/1. Catalyzes the synthesis of GMP from XMP. The protein is GMP synthase [glutamine-hydrolyzing] of Bacillus mycoides (strain KBAB4) (Bacillus weihenstephanensis).